A 344-amino-acid polypeptide reads, in one-letter code: Follistatin (344 aa).

The N-terminal stretch at 1–29 (MVCARHQPGGLCLLLLLLCQFMEDRSAQA) is a signal peptide. The 74-residue stretch at 30–103 (GNCWLRQAKN…TCENVDCGPG (74 aa)) folds into the TB domain. Disulfide bonds link Cys-32–Cys-55, Cys-42–Cys-88, Cys-56–Cys-91, Cys-95–Cys-106, Cys-100–Cys-116, Cys-118–Cys-150, Cys-122–Cys-143, Cys-132–Cys-164, Cys-168–Cys-179, Cys-173–Cys-189, Cys-192–Cys-225, Cys-196–Cys-218, Cys-207–Cys-239, Cys-245–Cys-256, Cys-250–Cys-267, Cys-270–Cys-302, Cys-274–Cys-295, and Cys-284–Cys-316. The Follistatin-like 1 domain maps to 94 to 117 (TCENVDCGPGKKCRMNKKNKPRCV). The region spanning 112 to 166 (NKPRCVCAPDCSNITWKGPVCGLDGKTYRNECALLKARCKEQPELEVQYQGKCKK) is the Kazal-like 1 domain. Asn-124 carries an N-linked (GlcNAc...) asparagine glycan. The Follistatin-like 2 domain maps to 167-190 (TCRDVFCPGSSTCVVDQTNNAYCV). One can recognise a Kazal-like 2 domain in the interval 186-241 (NAYCVTCNRICPEPSSSEQYLCGNDGVTYSSACHLRKATCLLGRSIGLAYEGKCIK). The 25-residue stretch at 244 to 268 (SCEDIQCGGGKKCLWDSKVGRGRCS) folds into the Follistatin-like 3 domain. A Kazal-like 3 domain is found at 264 to 318 (RGRCSLCDELCPDSKSDEPVCASDNATYASECAMKEAACSSGVLLEVKHSGSCNS). The N-linked (GlcNAc...) asparagine glycan is linked to Asn-288. The tract at residues 315–344 (SCNSISEETEEEEEEEDQDYSFPISSILEW) is disordered. Residues 321–333 (EETEEEEEEEDQD) show a composition bias toward acidic residues.

In terms of assembly, interacts with GDF11. Interacts with activin A/INHBA. Interacts with myostatin/MSTN.

It is found in the secreted. It localises to the nucleus. The protein localises to the nucleolus. Functionally, multifunctional regulatory protein whose primary function is to antagonize members of the transforming growth factor beta (TGF-beta) superfamily including activin, myostatin, GDF11 or bone morphogenetic proteins (BMPs). Mechanistically, binds to these ligands in the extracellular space, blocking their type II receptor-binding site to inhibit downstream signaling. Plays an essential role in muscle fiber formation and growth both by preventing the repressive effects of myostatin and through SMAD3/AKT/mTOR signaling independently of myostatin. Also promotes neural differentiation by antagonizing the action BMP4. Acts as a specific inhibitor of the biosynthesis and secretion of pituitary follicle stimulating hormone (FSH) by sequestering activin A/INHBA. On the other hand, translocates into the nucleus where it down-regulates rRNA synthesis and ribosome biogenesis to maintain cellular energy homeostasis by binding to rDNA. The protein is Follistatin of Mus musculus (Mouse).